Consider the following 282-residue polypeptide: Undecaprenyl-diphosphatase (282 aa).

Helical transmembrane passes span 7–29 (VLFA…HVVI), 45–65 (FLPF…LYFW), 89–109 (GLLL…FALK), 115–135 (LFAS…VLII), 153–173 (LTLR…LPGL), 196–216 (FAFL…VPHL), 229–249 (TALL…AFLM), and 258–278 (WALG…LILI).

This sequence belongs to the UppP family.

The protein localises to the cell inner membrane. It catalyses the reaction di-trans,octa-cis-undecaprenyl diphosphate + H2O = di-trans,octa-cis-undecaprenyl phosphate + phosphate + H(+). Functionally, catalyzes the dephosphorylation of undecaprenyl diphosphate (UPP). Confers resistance to bacitracin. The sequence is that of Undecaprenyl-diphosphatase from Acidiphilium cryptum (strain JF-5).